Consider the following 147-residue polypeptide: Hemoglobin subunit epsilon (147 aa).

Positions 3-147 constitute a Globin domain; the sequence is HFTAEEKAAV…VAIALAHKYH (145 aa). 2 positions are modified to phosphoserine: Ser14 and Ser51. Residues His64 and His93 each coordinate heme b.

Belongs to the globin family. Heterotetramer of two alpha chains and two epsilon chains in early embryonic hemoglobin Gower-2; two zeta chains and two epsilon chains in early embryonic hemoglobin Gower-1. In terms of tissue distribution, red blood cells.

Its function is as follows. The epsilon chain is a beta-type chain of early mammalian embryonic hemoglobin. In Pongo pygmaeus (Bornean orangutan), this protein is Hemoglobin subunit epsilon (HBE1).